Consider the following 200-residue polypeptide: Protein GrpE (200 aa).

Over residues 1–12 (MSNEEIKNKDEQ) the composition is skewed to basic and acidic residues. Residues 1–30 (MSNEEIKNKDEQLQQDAVETEAEVVGTDAD) are disordered.

Belongs to the GrpE family. Homodimer.

It localises to the cytoplasm. In terms of biological role, participates actively in the response to hyperosmotic and heat shock by preventing the aggregation of stress-denatured proteins, in association with DnaK and GrpE. It is the nucleotide exchange factor for DnaK and may function as a thermosensor. Unfolded proteins bind initially to DnaJ; upon interaction with the DnaJ-bound protein, DnaK hydrolyzes its bound ATP, resulting in the formation of a stable complex. GrpE releases ADP from DnaK; ATP binding to DnaK triggers the release of the substrate protein, thus completing the reaction cycle. Several rounds of ATP-dependent interactions between DnaJ, DnaK and GrpE are required for fully efficient folding. The protein is Protein GrpE of Vibrio cholerae serotype O1 (strain ATCC 39315 / El Tor Inaba N16961).